The primary structure comprises 494 residues: UPF0371 protein SEQ_1471 (494 aa).

The protein belongs to the UPF0371 family.

The chain is UPF0371 protein SEQ_1471 from Streptococcus equi subsp. equi (strain 4047).